A 537-amino-acid chain; its full sequence is Polyadenylate-binding protein 6 (537 aa).

RRM domains follow at residues 21–99 (GSLY…WSQR), 112–188 (ANLY…KFIN), 202–279 (TNVY…KALK), and 304–381 (SNLY…VAER). The tract at residues 503 to 537 (KATTSEENRKEERRLTLSGKLSPEVKVEESGKQLQ) is disordered. Basic and acidic residues-rich tracts occupy residues 506-517 (TSEENRKEERRL) and 525-537 (PEVK…KQLQ).

This sequence belongs to the polyadenylate-binding protein type-1 family. Expressed at low levels in leaves and young seedlings.

Its subcellular location is the cytoplasm. The protein localises to the nucleus. Functionally, binds the poly(A) tail of mRNA. Appears to be an important mediator of the multiple roles of the poly(A) tail in mRNA biogenesis, stability and translation. The sequence is that of Polyadenylate-binding protein 6 (PAB6) from Arabidopsis thaliana (Mouse-ear cress).